Here is a 171-residue protein sequence, read N- to C-terminus: Peptide deformylase 1 (171 aa).

Residues C99 and H141 each contribute to the Fe cation site. Residue E142 is part of the active site. H145 lines the Fe cation pocket.

The protein belongs to the polypeptide deformylase family. Fe(2+) is required as a cofactor.

It carries out the reaction N-terminal N-formyl-L-methionyl-[peptide] + H2O = N-terminal L-methionyl-[peptide] + formate. In terms of biological role, removes the formyl group from the N-terminal Met of newly synthesized proteins. Requires at least a dipeptide for an efficient rate of reaction. N-terminal L-methionine is a prerequisite for activity but the enzyme has broad specificity at other positions. This chain is Peptide deformylase 1, found in Xanthomonas campestris pv. campestris (strain ATCC 33913 / DSM 3586 / NCPPB 528 / LMG 568 / P 25).